Here is a 289-residue protein sequence, read N- to C-terminus: Phosphoribulokinase (289 aa).

12-20 (GSSGAGTTT) is a binding site for ATP.

Belongs to the phosphoribulokinase family.

It catalyses the reaction D-ribulose 5-phosphate + ATP = D-ribulose 1,5-bisphosphate + ADP + H(+). Its pathway is carbohydrate biosynthesis; Calvin cycle. The polypeptide is Phosphoribulokinase (cbbP) (Rhizobium meliloti (strain 1021) (Ensifer meliloti)).